The following is a 202-amino-acid chain: ATP synthase subunit b (202 aa).

Residues 9–29 (TTLSLCLAVCVVVIAVGTGWA) traverse the membrane as a helical segment.

It belongs to the ATPase B chain family. As to quaternary structure, F-type ATPases have 2 components, F(1) - the catalytic core - and F(0) - the membrane proton channel. F(1) has five subunits: alpha(3), beta(3), gamma(1), delta(1), epsilon(1). F(0) has three main subunits: a(1), b(2) and c(10-14). The alpha and beta chains form an alternating ring which encloses part of the gamma chain. F(1) is attached to F(0) by a central stalk formed by the gamma and epsilon chains, while a peripheral stalk is formed by the delta and b chains.

It is found in the cell inner membrane. Its function is as follows. F(1)F(0) ATP synthase produces ATP from ADP in the presence of a proton or sodium gradient. F-type ATPases consist of two structural domains, F(1) containing the extramembraneous catalytic core and F(0) containing the membrane proton channel, linked together by a central stalk and a peripheral stalk. During catalysis, ATP synthesis in the catalytic domain of F(1) is coupled via a rotary mechanism of the central stalk subunits to proton translocation. Functionally, component of the F(0) channel, it forms part of the peripheral stalk, linking F(1) to F(0). The sequence is that of ATP synthase subunit b from Pelobacter propionicus (strain DSM 2379 / NBRC 103807 / OttBd1).